Reading from the N-terminus, the 327-residue chain is Methionyl-tRNA formyltransferase (327 aa).

121–124 (SLLP) is a (6S)-5,6,7,8-tetrahydrofolate binding site.

Belongs to the Fmt family.

It carries out the reaction L-methionyl-tRNA(fMet) + (6R)-10-formyltetrahydrofolate = N-formyl-L-methionyl-tRNA(fMet) + (6S)-5,6,7,8-tetrahydrofolate + H(+). Its function is as follows. Attaches a formyl group to the free amino group of methionyl-tRNA(fMet). The formyl group appears to play a dual role in the initiator identity of N-formylmethionyl-tRNA by promoting its recognition by IF2 and preventing the misappropriation of this tRNA by the elongation apparatus. In Burkholderia vietnamiensis (strain G4 / LMG 22486) (Burkholderia cepacia (strain R1808)), this protein is Methionyl-tRNA formyltransferase.